Reading from the N-terminus, the 600-residue chain is Proline--tRNA ligase (600 aa).

Belongs to the class-II aminoacyl-tRNA synthetase family. ProS type 1 subfamily. As to quaternary structure, homodimer.

It localises to the cytoplasm. The catalysed reaction is tRNA(Pro) + L-proline + ATP = L-prolyl-tRNA(Pro) + AMP + diphosphate. Catalyzes the attachment of proline to tRNA(Pro) in a two-step reaction: proline is first activated by ATP to form Pro-AMP and then transferred to the acceptor end of tRNA(Pro). As ProRS can inadvertently accommodate and process non-cognate amino acids such as alanine and cysteine, to avoid such errors it has two additional distinct editing activities against alanine. One activity is designated as 'pretransfer' editing and involves the tRNA(Pro)-independent hydrolysis of activated Ala-AMP. The other activity is designated 'posttransfer' editing and involves deacylation of mischarged Ala-tRNA(Pro). The misacylated Cys-tRNA(Pro) is not edited by ProRS. This is Proline--tRNA ligase from Prochlorococcus marinus subsp. pastoris (strain CCMP1986 / NIES-2087 / MED4).